Reading from the N-terminus, the 442-residue chain is Chitinase-like protein Idgf4 (442 aa).

The signal sequence occupies residues 1–21 (MKLYALFSLLVGSLAIGQISA). The GH18 domain maps to 25 to 442 (HHLLCYYDGN…PILRQVKSKL (418 aa)). A disulfide bond links C29 and C56. Residue N224 is glycosylated (N-linked (GlcNAc...) asparagine). The cysteines at positions 343 and 426 are disulfide-linked.

It belongs to the glycosyl hydrolase 18 family. IDGF subfamily. In terms of processing, glycosylated. Primarily expressed in yolk cells and fat body. In larvae, it is expressed in the imaginal ring, the salivary duct, large salivary gland cells and weakly expressed in imaginal disks. More strongly expressed than Idgf1 and Idgf3.

It localises to the secreted. In terms of biological role, cooperates with insulin-like peptides to stimulate the proliferation, polarization and motility of imaginal disk cells. May act by stabilizing the binding of insulin-like peptides to its receptor through a simultaneous interaction with both molecules to form a multiprotein signaling complex. This chain is Chitinase-like protein Idgf4 (Idgf4), found in Drosophila melanogaster (Fruit fly).